The sequence spans 638 residues: 1-deoxy-D-xylulose-5-phosphate synthase (638 aa).

Thiamine diphosphate is bound by residues His-77 and 118–120; that span reads AHA. Asp-149 contributes to the Mg(2+) binding site. Thiamine diphosphate contacts are provided by residues 150–151, Asn-178, Tyr-287, and Glu-369; that span reads GS. Asn-178 provides a ligand contact to Mg(2+).

It belongs to the transketolase family. DXPS subfamily. Homodimer. Mg(2+) serves as cofactor. Thiamine diphosphate is required as a cofactor.

It carries out the reaction D-glyceraldehyde 3-phosphate + pyruvate + H(+) = 1-deoxy-D-xylulose 5-phosphate + CO2. The protein operates within metabolic intermediate biosynthesis; 1-deoxy-D-xylulose 5-phosphate biosynthesis; 1-deoxy-D-xylulose 5-phosphate from D-glyceraldehyde 3-phosphate and pyruvate: step 1/1. Functionally, catalyzes the acyloin condensation reaction between C atoms 2 and 3 of pyruvate and glyceraldehyde 3-phosphate to yield 1-deoxy-D-xylulose-5-phosphate (DXP). The sequence is that of 1-deoxy-D-xylulose-5-phosphate synthase from Phenylobacterium zucineum (strain HLK1).